Reading from the N-terminus, the 161-residue chain is ATP synthase subunit b (161 aa).

The helical transmembrane segment at 2–22 threads the bilayer; that stretch reads VIEWGTALYQLLAFAVLLLIL.

Belongs to the ATPase B chain family. F-type ATPases have 2 components, F(1) - the catalytic core - and F(0) - the membrane proton channel. F(1) has five subunits: alpha(3), beta(3), gamma(1), delta(1), epsilon(1). F(0) has three main subunits: a(1), b(2) and c(10-14). The alpha and beta chains form an alternating ring which encloses part of the gamma chain. F(1) is attached to F(0) by a central stalk formed by the gamma and epsilon chains, while a peripheral stalk is formed by the delta and b chains.

It is found in the cell membrane. In terms of biological role, f(1)F(0) ATP synthase produces ATP from ADP in the presence of a proton or sodium gradient. F-type ATPases consist of two structural domains, F(1) containing the extramembraneous catalytic core and F(0) containing the membrane proton channel, linked together by a central stalk and a peripheral stalk. During catalysis, ATP synthesis in the catalytic domain of F(1) is coupled via a rotary mechanism of the central stalk subunits to proton translocation. Component of the F(0) channel, it forms part of the peripheral stalk, linking F(1) to F(0). This Shouchella clausii (strain KSM-K16) (Alkalihalobacillus clausii) protein is ATP synthase subunit b.